Consider the following 864-residue polypeptide: Arf-GAP with GTPase, ANK repeat and PH domain-containing protein 1 (864 aa).

The segment at 66–276 (SRSVPELKVG…QTSNGGGSLS (211 aa)) is small GTPase-like. The GLD domain maps to 67–241 (RSVPELKVGI…TRKKQQLSIG (175 aa)). GTP-binding positions include 78–85 (GNLASGKS), 122–126 (IRDEG), and 178–181 (TQDA). 3 disordered regions span residues 266-343 (SQTS…IGSG), 405-455 (VPGK…QMAS), and 499-549 (TGLG…LSST). Positions 275-289 (LSDYSSSVPSTPSTS) are enriched in low complexity. A compositionally biased stretch (basic and acidic residues) spans 322-337 (KGSDPDKDKKGLESRA). The PH domain maps to 346–591 (IPIKQGMLLK…WVQAIESQIL (246 aa)). Polar residues predominate over residues 413–428 (ATSSCAPVASPKTNGL). The span at 507–517 (SSPSISSTTSP) shows a compositional bias: low complexity. Residues 527–537 (ANRKKHRRKKS) are compositionally biased toward basic residues. The segment covering 538-549 (TSNFKVDGLSST) has biased composition (polar residues). An Arf-GAP domain is found at 612–732 (ALALQSIRNL…LFLSPLPCRD (121 aa)). Residues 627–650 (CVDCDAQSPDWASLNLGALMCIEC) form a C4-type zinc finger. ANK repeat units lie at residues 771-800 (DRRT…DVMA) and 804-833 (HGNT…PDEQ). The span at 845–854 (KNNRNNNSNA) shows a compositional bias: low complexity. The disordered stretch occupies residues 845–864 (KNNRNNNSNAGGSGLMPTLI).

This sequence belongs to the centaurin gamma-like family. Homodimer. Interacts with several subunits of the AP-3 protein complex.

Its subcellular location is the cytoplasm. Its function is as follows. GTPase-activating protein. Directly and specifically regulates the adapter protein 3 (AP-3)-dependent trafficking of proteins in the endosomal-lysosomal system. This is Arf-GAP with GTPase, ANK repeat and PH domain-containing protein 1 (agap1) from Xenopus laevis (African clawed frog).